The primary structure comprises 51 residues: Large ribosomal subunit protein bL33 (51 aa).

The interval 1-21 is disordered; the sequence is MRDKIKLESSAGTGHFYTTTK. Over residues 10-20 the composition is skewed to polar residues; that stretch reads SAGTGHFYTTT.

This sequence belongs to the bacterial ribosomal protein bL33 family.

The sequence is that of Large ribosomal subunit protein bL33 (rpmG) from Neisseria meningitidis serogroup A / serotype 4A (strain DSM 15465 / Z2491).